The sequence spans 578 residues: Tetratricopeptide repeat protein ttc-39B (578 aa).

TPR repeat units follow at residues 297-330 (AIML…QDVY), 481-514 (CLYY…ESSI), and 522-554 (PNAT…YKSY).

The sequence is that of Tetratricopeptide repeat protein ttc-39B from Caenorhabditis elegans.